Reading from the N-terminus, the 184-residue chain is ATP synthase subunit b, chloroplastic (184 aa).

Residues 27–49 form a helical membrane-spanning segment; sequence LATNLINLSVVLGVLVFFGKGVL.

This sequence belongs to the ATPase B chain family. As to quaternary structure, F-type ATPases have 2 components, F(1) - the catalytic core - and F(0) - the membrane proton channel. F(1) has five subunits: alpha(3), beta(3), gamma(1), delta(1), epsilon(1). F(0) has four main subunits: a(1), b(1), b'(1) and c(10-14). The alpha and beta chains form an alternating ring which encloses part of the gamma chain. F(1) is attached to F(0) by a central stalk formed by the gamma and epsilon chains, while a peripheral stalk is formed by the delta, b and b' chains.

It is found in the plastid. The protein localises to the chloroplast thylakoid membrane. Its function is as follows. F(1)F(0) ATP synthase produces ATP from ADP in the presence of a proton or sodium gradient. F-type ATPases consist of two structural domains, F(1) containing the extramembraneous catalytic core and F(0) containing the membrane proton channel, linked together by a central stalk and a peripheral stalk. During catalysis, ATP synthesis in the catalytic domain of F(1) is coupled via a rotary mechanism of the central stalk subunits to proton translocation. In terms of biological role, component of the F(0) channel, it forms part of the peripheral stalk, linking F(1) to F(0). The chain is ATP synthase subunit b, chloroplastic from Cicer arietinum (Chickpea).